We begin with the raw amino-acid sequence, 61 residues long: Photosystem II reaction center protein K (61 aa).

Positions 1–24 are excised as a propeptide; the sequence is MLNIFSLIWICLNSALYSSGFFFG. A helical membrane pass occupies residues 36-56; it reads IIDFMPVIPVFFFLLAFVWQA.

This sequence belongs to the PsbK family. As to quaternary structure, PSII is composed of 1 copy each of membrane proteins PsbA, PsbB, PsbC, PsbD, PsbE, PsbF, PsbH, PsbI, PsbJ, PsbK, PsbL, PsbM, PsbT, PsbX, PsbY, PsbZ, Psb30/Ycf12, at least 3 peripheral proteins of the oxygen-evolving complex and a large number of cofactors. It forms dimeric complexes.

The protein localises to the plastid. The protein resides in the chloroplast thylakoid membrane. Functionally, one of the components of the core complex of photosystem II (PSII). PSII is a light-driven water:plastoquinone oxidoreductase that uses light energy to abstract electrons from H(2)O, generating O(2) and a proton gradient subsequently used for ATP formation. It consists of a core antenna complex that captures photons, and an electron transfer chain that converts photonic excitation into a charge separation. In Coffea arabica (Arabian coffee), this protein is Photosystem II reaction center protein K.